Consider the following 313-residue polypeptide: Cytochrome c biogenesis protein CcsA (313 aa).

The next 8 membrane-spanning stretches (helical) occupy residues 9–29 (ILTH…LITF), 44–64 (GIIV…VSSG), 71–91 (LYES…IPYF), 111–131 (GFAT…VPAL), 143–163 (MILG…LLVI), 217–237 (VISL…VWAN), 244–264 (WNWD…AIYL), and 278–298 (AIVA…VNLL).

Belongs to the CcmF/CycK/Ccl1/NrfE/CcsA family. May interact with Ccs1.

It localises to the plastid. It is found in the chloroplast thylakoid membrane. Functionally, required during biogenesis of c-type cytochromes (cytochrome c6 and cytochrome f) at the step of heme attachment. The protein is Cytochrome c biogenesis protein CcsA of Solanum lycopersicum (Tomato).